The chain runs to 289 residues: Protease HtpX (289 aa).

2 helical membrane-spanning segments follow: residues 4–24 (IMLFLATNLAVVLVLSVVLNI) and 36–56 (LSGLLVMAAVFGFGGAFISLM). His143 is a Zn(2+) binding site. Glu144 is an active-site residue. A Zn(2+)-binding site is contributed by His147. The next 2 helical transmembrane spans lie at 158–178 (LMQGVVNTFVIFLSRFIANIV) and 192–212 (MVYFGVSMVLELVFGFLASFL). Glu221 is a binding site for Zn(2+).

The protein belongs to the peptidase M48B family. It depends on Zn(2+) as a cofactor.

Its subcellular location is the cell inner membrane. In Vibrio campbellii (strain ATCC BAA-1116), this protein is Protease HtpX.